Reading from the N-terminus, the 103-residue chain is MTSFNIFFLLFFSFVIFFLGILGIFITRKNIIIILVSIELMLLAVNFNFAIFSVLLEDMFGQVFILYTLTLAGAEAAIGLAILIIFYRIRGIISVNFVTSLKG.

The next 3 membrane-spanning stretches (helical) occupy residues 6–26, 31–51, and 65–85; these read IFFL…GIFI, IIII…NFAI, and ILYT…ILII.

This sequence belongs to the complex I subunit 4L family.

It localises to the mitochondrion membrane. It catalyses the reaction a ubiquinone + NADH + 5 H(+)(in) = a ubiquinol + NAD(+) + 4 H(+)(out). In terms of biological role, core subunit of the mitochondrial membrane respiratory chain NADH dehydrogenase (Complex I) that is believed to belong to the minimal assembly required for catalysis. Complex I functions in the transfer of electrons from NADH to the respiratory chain. The immediate electron acceptor for the enzyme is believed to be ubiquinone. This chain is NADH-ubiquinone oxidoreductase chain 4L (ND4L), found in Acanthamoeba castellanii (Amoeba).